We begin with the raw amino-acid sequence, 22 residues long: MMMFITGYDINQKQKKRYGLRG.

Residues 3-22 (MFITGYDINQKQKKRYGLRG) form a helical membrane-spanning segment.

The protein belongs to the asfivirus C84L family.

Its subcellular location is the host membrane. This is an uncharacterized protein from Ornithodoros (relapsing fever ticks).